A 399-amino-acid polypeptide reads, in one-letter code: Accessory Sec system protein translocase subunit SecY2 (399 aa).

A run of 10 helical transmembrane segments spans residues 14-34 (IFFT…SIVS), 60-80 (LNIF…LTLI), 102-122 (ALTL…YINK), 128-148 (SNML…VWLA), 152-172 (TTYG…KSIF), 183-203 (ASLI…LFFI), 237-257 (ISIM…NFIG), 272-292 (FTNP…GYFL), 335-355 (WFGS…ALLV), and 362-382 (VYFT…AETI).

This sequence belongs to the SecY/SEC61-alpha family. SecY2 subfamily. Component of the accessory SecA2/SecY2 protein translocase complex required to export cell wall proteins. May form heterotrimers with SecE and SecG subunits.

It is found in the cell membrane. In terms of biological role, part of the accessory SecA2/SecY2 system specifically required for export of possible cell wall proteins. The central subunit of a protein translocation channel. This chain is Accessory Sec system protein translocase subunit SecY2, found in Staphylococcus epidermidis (strain ATCC 12228 / FDA PCI 1200).